We begin with the raw amino-acid sequence, 446 residues long: Probable 1,4-beta-D-glucan cellobiohydrolase A (446 aa).

The N-terminal stretch at 1–17 (MYQRALLFSALLSVSRA) is a signal peptide. The N-linked (GlcNAc...) asparagine glycan is linked to Asn81. The active-site Nucleophile is Glu226. Glu231 serves as the catalytic Proton donor. N-linked (GlcNAc...) asparagine glycans are attached at residues Asn284 and Asn333. The segment at 399-420 (TDADPSQPGVARGTCEQGAGDP) is disordered.

Belongs to the glycosyl hydrolase 7 (cellulase C) family.

The protein resides in the secreted. It catalyses the reaction Hydrolysis of (1-&gt;4)-beta-D-glucosidic linkages in cellulose and cellotetraose, releasing cellobiose from the non-reducing ends of the chains.. Functionally, the biological conversion of cellulose to glucose generally requires three types of hydrolytic enzymes: (1) Endoglucanases which cut internal beta-1,4-glucosidic bonds; (2) Exocellobiohydrolases that cut the disaccharide cellobiose from the non-reducing end of the cellulose polymer chain; (3) Beta-1,4-glucosidases which hydrolyze the cellobiose and other short cello-oligosaccharides to glucose. In Emericella nidulans (strain FGSC A4 / ATCC 38163 / CBS 112.46 / NRRL 194 / M139) (Aspergillus nidulans), this protein is Probable 1,4-beta-D-glucan cellobiohydrolase A (cbhA).